Consider the following 103-residue polypeptide: Small ribosomal subunit protein bS18c (103 aa).

The protein belongs to the bacterial ribosomal protein bS18 family. As to quaternary structure, part of the 30S ribosomal subunit.

Its subcellular location is the plastid. The protein resides in the chloroplast. This is Small ribosomal subunit protein bS18c (rps18) from Chlorella vulgaris (Green alga).